Reading from the N-terminus, the 164-residue chain is Ribonuclease P protein component 2 (164 aa).

It belongs to the eukaryotic/archaeal RNase P protein component 2 family. Consists of a catalytic RNA component and at least 4-5 protein subunits.

The protein resides in the cytoplasm. It catalyses the reaction Endonucleolytic cleavage of RNA, removing 5'-extranucleotides from tRNA precursor.. Part of ribonuclease P, a protein complex that generates mature tRNA molecules by cleaving their 5'-ends. This is Ribonuclease P protein component 2 from Halobacterium salinarum (strain ATCC 29341 / DSM 671 / R1).